The following is a 634-amino-acid chain: Ras and EF-hand domain-containing protein homolog (634 aa).

EF-hand domains are found at residues 5–33 (DVEN…CPQL) and 33–68 (LDDN…TVQH). Ca(2+) contacts are provided by Asp-46, Asp-48, Ser-50, Lys-52, and Glu-57. The stretch at 169–310 (LSEKKHENER…RADFDQKQDE (142 aa)) forms a coiled coil. Disordered regions lie at residues 216–237 (ERER…EMSE) and 308–328 (QDEL…SESV). Residues 449–454 (AVGKSS), 552–555 (NKVD), and 585–586 (AL) each bind GTP. A propeptide spans 632–634 (RGS) (removed in mature form).

The protein belongs to the small GTPase superfamily. Rab family. Homodimer.

The protein resides in the cytoplasm. The protein localises to the perinuclear region. Functionally, binds GTP and GDP. Plays a role in uterine seam cell development. This is Ras and EF-hand domain-containing protein homolog from Caenorhabditis briggsae.